The sequence spans 154 residues: Prefoldin subunit 2 (154 aa).

Residues 1–18 are compositionally biased toward gly residues; the sequence is MAENGGRAGKSSGSGTGK. Disordered regions lie at residues 1–20 and 124–154; these read MAENGGRAGKSSGSGTGKGA and IRLMGEDEKPAAKENSEGAGAKASSAGVLVS. A compositionally biased stretch (basic and acidic residues) spans 124-139; the sequence is IRLMGEDEKPAAKENS. Residues 140-154 show a composition bias toward low complexity; sequence EGAGAKASSAGVLVS.

This sequence belongs to the prefoldin subunit beta family. As to quaternary structure, heterohexamer of two PFD-alpha type and four PFD-beta type subunits. Component of the PAQosome complex which is responsible for the biogenesis of several protein complexes and which consists of R2TP complex members RUVBL1, RUVBL2, RPAP3 and PIH1D1, URI complex members PFDN2, PFDN6, PDRG1, UXT and URI1 as well as ASDURF, POLR2E and DNAAF10/WDR92. Interacts with URI1; the interaction is phosphorylation-dependent and occurs in a growth-dependent manner.

It is found in the nucleus. Its subcellular location is the cytoplasm. The protein localises to the mitochondrion. Functionally, binds specifically to cytosolic chaperonin (c-CPN) and transfers target proteins to it. Binds to nascent polypeptide chain and promotes folding in an environment in which there are many competing pathways for nonnative proteins. The polypeptide is Prefoldin subunit 2 (PFDN2) (Bos taurus (Bovine)).